The sequence spans 396 residues: Purple acid phosphatase 5 (396 aa).

Positions methionine 1–asparagine 13 are cleaved as a signal peptide. N-linked (GlcNAc...) asparagine glycosylation is present at asparagine 58. Aspartate 125 contacts Fe cation. Asparagine 133 carries an N-linked (GlcNAc...) asparagine glycan. Fe cation-binding residues include aspartate 153 and tyrosine 156. Aspartate 153 is a binding site for Zn(2+). Position 190 (asparagine 190) interacts with Zn(2+). Asparagine 190 is a substrate binding site. Asparagine 238 is a glycosylation site (N-linked (GlcNAc...) asparagine). Histidine 250 provides a ligand contact to Zn(2+). The active-site Proton donor is histidine 260. Histidine 287 is a binding site for Zn(2+). Histidine 287–histidine 289 serves as a coordination point for substrate. Histidine 289 contributes to the Fe cation binding site. N-linked (GlcNAc...) asparagine glycans are attached at residues asparagine 303 and asparagine 360.

It belongs to the metallophosphoesterase superfamily. Purple acid phosphatase family. As to quaternary structure, homodimer. The cofactor is Fe cation. It depends on Zn(2+) as a cofactor.

The protein resides in the secreted. The enzyme catalyses a phosphate monoester + H2O = an alcohol + phosphate. The protein is Purple acid phosphatase 5 (PAP5) of Arabidopsis thaliana (Mouse-ear cress).